The following is a 464-amino-acid chain: ATP synthase subunit beta (464 aa).

Residue 153–160 (GGAGVGKT) coordinates ATP.

Belongs to the ATPase alpha/beta chains family. F-type ATPases have 2 components, CF(1) - the catalytic core - and CF(0) - the membrane proton channel. CF(1) has five subunits: alpha(3), beta(3), gamma(1), delta(1), epsilon(1). CF(0) has three main subunits: a(1), b(2) and c(9-12). The alpha and beta chains form an alternating ring which encloses part of the gamma chain. CF(1) is attached to CF(0) by a central stalk formed by the gamma and epsilon chains, while a peripheral stalk is formed by the delta and b chains.

The protein localises to the cell inner membrane. It carries out the reaction ATP + H2O + 4 H(+)(in) = ADP + phosphate + 5 H(+)(out). Functionally, produces ATP from ADP in the presence of a proton gradient across the membrane. The catalytic sites are hosted primarily by the beta subunits. This is ATP synthase subunit beta from Burkholderia cenocepacia (strain ATCC BAA-245 / DSM 16553 / LMG 16656 / NCTC 13227 / J2315 / CF5610) (Burkholderia cepacia (strain J2315)).